The following is a 455-amino-acid chain: Ribosome biogenesis protein NOP53 (455 aa).

Residues 1-15 show a composition bias toward polar residues; it reads MAPTNLTKKPSQYKQ. The disordered stretch occupies residues 1–25; the sequence is MAPTNLTKKPSQYKQSSRKGKKAWR. Basic residues predominate over residues 16–25; it reads SSRKGKKAWR. Ser31 carries the post-translational modification Phosphoserine. The interval 264-333 is disordered; the sequence is HLMETLDDNE…RNKAKRHEEK (70 aa). Residues 268-294 are compositionally biased toward acidic residues; the sequence is TLDDNEEEESSSNEEEEEEEEENENEN. Positions 314-328 are enriched in basic residues; sequence VKNKKKTKYQRNKAK.

This sequence belongs to the NOP53 family. Interacts with CBF5, FPR3, FPR4, NOP2, PIH1, RRN3, RRP6 and PAP2. Interacts with pre-60S ribosomal particles.

It is found in the nucleus. Its subcellular location is the nucleolus. The protein localises to the nucleoplasm. Its function is as follows. Late-acting factor in the nuclear maturation of 60S ribosomal subunits, which is required for normal acquisition of export competence. Required for the export of the large subunit. Acts to stimulate the RNase activity of the exosome complex, and may recruit the exosome to 7S pre-rRNA for processing. Associates with numerous RNAs including the 27S and 7S pre-rRNAs and the box H/ACA snoRNA snR37. Also interacts (via N-terminal region) with the mature 25S rRNA and the mature 5.8S rRNA. This Saccharomyces cerevisiae (strain ATCC 204508 / S288c) (Baker's yeast) protein is Ribosome biogenesis protein NOP53.